A 177-amino-acid chain; its full sequence is Large ribosomal subunit protein uL10 (177 aa).

Belongs to the universal ribosomal protein uL10 family. As to quaternary structure, part of the ribosomal stalk of the 50S ribosomal subunit. The N-terminus interacts with L11 and the large rRNA to form the base of the stalk. The C-terminus forms an elongated spine to which L12 dimers bind in a sequential fashion forming a multimeric L10(L12)X complex.

In terms of biological role, forms part of the ribosomal stalk, playing a central role in the interaction of the ribosome with GTP-bound translation factors. The sequence is that of Large ribosomal subunit protein uL10 from Leptospira biflexa serovar Patoc (strain Patoc 1 / Ames).